The chain runs to 141 residues: Large ribosomal subunit protein uL16 (141 aa).

The tract at residues 1-23 (MLMPKRTKWRKQQKGRNRGKSFR) is disordered.

It belongs to the universal ribosomal protein uL16 family. Part of the 50S ribosomal subunit.

Functionally, binds 23S rRNA and is also seen to make contacts with the A and possibly P site tRNAs. In Sulfurovum sp. (strain NBC37-1), this protein is Large ribosomal subunit protein uL16.